The following is a 138-amino-acid chain: Putative ribonuclease VapC45 (138 aa).

Functionally, toxic component of a type II toxin-antitoxin (TA) system. An RNase. The cognate antitoxin is VapB45. The polypeptide is Putative ribonuclease VapC45 (Mycobacterium tuberculosis (strain ATCC 25618 / H37Rv)).